The chain runs to 510 residues: GMP synthase [glutamine-hydrolyzing] (510 aa).

Residues 3 to 194 form the Glutamine amidotransferase type-1 domain; that stretch reads QILILDFGSQ…ARVICGYKEK (192 aa). C80 serves as the catalytic Nucleophile. Catalysis depends on residues H168 and E170. The GMPS ATP-PPase domain occupies 195 to 385; it reads WTPASIMTAS…LGLGSEIVDI (191 aa). Position 222 to 228 (222 to 228) interacts with ATP; it reads SGGVDSS.

As to quaternary structure, homodimer.

It catalyses the reaction XMP + L-glutamine + ATP + H2O = GMP + L-glutamate + AMP + diphosphate + 2 H(+). It participates in purine metabolism; GMP biosynthesis; GMP from XMP (L-Gln route): step 1/1. Catalyzes the synthesis of GMP from XMP. The protein is GMP synthase [glutamine-hydrolyzing] of Elusimicrobium minutum (strain Pei191).